Consider the following 485-residue polypeptide: Carbohydrate sulfotransferase 7 (485 aa).

The Cytoplasmic portion of the chain corresponds to 1 to 12; that stretch reads MKGRRRRRREYC. The chain crosses the membrane as a helical; Signal-anchor for type II membrane protein span at residues 13 to 33; the sequence is KFTLLLALYTLLLLLVPSVLD. At 34-485 the chain is on the lumenal side; sequence SGSEQDKGGR…PLETNANWAT (452 aa). The interval 66–88 is disordered; it reads EQGAEVRFQAEGNPDRSPRPQGN. N-linked (GlcNAc...) asparagine glycosylation is present at Asn-88. 109–115 lines the 3'-phosphoadenylyl sulfate pocket; sequence WRTGSSF. An N-linked (GlcNAc...) asparagine glycan is attached at Asn-185. 3'-phosphoadenylyl sulfate is bound at residue 277-285; that stretch reads RDPRAVHNS. Asn-406 carries N-linked (GlcNAc...) asparagine glycosylation. Ser-461 bears the Phosphoserine mark. Basic and acidic residues predominate over residues 465 to 475; it reads RDVKTVRKGET. Residues 465 to 485 are disordered; it reads RDVKTVRKGETPLETNANWAT.

Belongs to the sulfotransferase 1 family. Gal/GlcNAc/GalNAc subfamily.

The protein localises to the golgi apparatus membrane. The enzyme catalyses chondroitin beta-D-glucuronate + n 3'-phosphoadenylyl sulfate = chondroitin 6'-sulfate + n adenosine 3',5'-bisphosphate + n H(+). Functionally, sulfotransferase that utilizes 3'-phospho-5'-adenylyl sulfate (PAPS) as sulfonate donor to catalyze the transfer of sulfate to position 6 of non-reducing N-acetylglucosamine (GlcNAc) residues. Preferentially acts on mannose-linked GlcNAc. Also able to catalyze the transfer of sulfate to position 6 of the N-acetylgalactosamine (GalNAc) residue of chondroitin. Also acts on core 2 mucin-type oligosaccharide and N-acetyllactosamine oligomer with a lower efficiency. Has weak or no activity toward keratan sulfate and oligosaccharides containing the Galbeta1-4GlcNAc. Catalyzes 6-O-sulfation of beta-benzyl GlcNAc but not alpha- or beta-benzyl GalNAc. The chain is Carbohydrate sulfotransferase 7 (Chst7) from Rattus norvegicus (Rat).